Here is a 123-residue protein sequence, read N- to C-terminus: Large ribosomal subunit protein uL14c (123 aa).

The protein belongs to the universal ribosomal protein uL14 family. In terms of assembly, part of the 50S ribosomal subunit.

It localises to the plastid. It is found in the chloroplast. Binds to 23S rRNA. The sequence is that of Large ribosomal subunit protein uL14c from Saccharum hybrid (Sugarcane).